A 226-amino-acid chain; its full sequence is RING-H2 finger protein ATL75 (226 aa).

The chain crosses the membrane as a helical span at residues 60 to 80 (LMLLSVLICGIICCLGLHYII). Residues 136-178 (CVICLSDFVSGEQIRMLPKCHHGFHVRCIDKWLQQHLTCPKCR) form an RING-type; atypical zinc finger.

The protein belongs to the RING-type zinc finger family. ATL subfamily.

It is found in the membrane. It carries out the reaction S-ubiquitinyl-[E2 ubiquitin-conjugating enzyme]-L-cysteine + [acceptor protein]-L-lysine = [E2 ubiquitin-conjugating enzyme]-L-cysteine + N(6)-ubiquitinyl-[acceptor protein]-L-lysine.. The protein operates within protein modification; protein ubiquitination. The sequence is that of RING-H2 finger protein ATL75 (ATL75) from Arabidopsis thaliana (Mouse-ear cress).